We begin with the raw amino-acid sequence, 445 residues long: C-terminal-binding protein 2 (445 aa).

Arg-22 carries the asymmetric dimethylarginine modification. NAD(+) is bound by residues Ser-106, 186-191 (IGFGRT), Asp-210, 243-249 (CNLNEHN), 270-272 (AAR), and Asp-296. Arg-272 is an active-site residue. Glu-301 is an active-site residue. His-321 (proton donor) is an active-site residue. 321 to 324 (HTAW) is a binding site for NAD(+). Residues 414–445 (THNLPTVAHPSQAPSPNQPTKHGDNREHPNEQ) form a disordered region. A Phosphoserine; by HIPK2 modification is found at Ser-428. Basic and acidic residues predominate over residues 434-445 (KHGDNREHPNEQ).

It belongs to the D-isomer specific 2-hydroxyacid dehydrogenase family. In terms of assembly, interacts with HIPK2 and PNN. Interacts with the transcription factors ZNF217, BKLF, delta EF1/AREB6/ZEB, EVI-1 and Friend of GATA (FOG) via the consensus motif P-X-[DNS]-L-[STVA]. Also interacts with the C-terminus of adenovirus E1A protein. Can form a complex with BKLF on a CACCC-box oligonucleotide. Can form homodimers or heterodimers of CTBP1 and CTBP2. Interacts with NRIP1 and WIZ. Interacts with PRDM16; represses white adipose tissue (WAT)-specific genes expression. Interacts with MCRIP1. In terms of processing, phosphorylation by HIPK2 on Ser-428 induces proteasomal degradation. Found in all tissues except spleen and liver.

Its subcellular location is the nucleus. It is found in the synapse. Functionally, corepressor targeting diverse transcription regulators. Isoform 2 probably acts as a scaffold for specialized synapses. Functions in brown adipose tissue (BAT) differentiation. In Mus musculus (Mouse), this protein is C-terminal-binding protein 2 (Ctbp2).